The primary structure comprises 231 residues: Large ribosomal subunit protein uL1 (231 aa).

Belongs to the universal ribosomal protein uL1 family. As to quaternary structure, part of the 50S ribosomal subunit.

Binds directly to 23S rRNA. The L1 stalk is quite mobile in the ribosome, and is involved in E site tRNA release. Functionally, protein L1 is also a translational repressor protein, it controls the translation of the L11 operon by binding to its mRNA. The polypeptide is Large ribosomal subunit protein uL1 (Mesomycoplasma hyopneumoniae (strain 232) (Mycoplasma hyopneumoniae)).